The primary structure comprises 357 residues: Aspartate carbamoyltransferase catalytic subunit (357 aa).

Positions 1-15 (MSNSIDSQSLPTVSP) are enriched in polar residues. The disordered stretch occupies residues 1–21 (MSNSIDSQSLPTVSPTDYARF). 2 residues coordinate carbamoyl phosphate: Arg-97 and Thr-98. An L-aspartate-binding site is contributed by Lys-125. 3 residues coordinate carbamoyl phosphate: Arg-147, His-177, and Gln-180. Residues Arg-211 and Arg-266 each coordinate L-aspartate. Carbamoyl phosphate contacts are provided by Gly-307 and Pro-308.

This sequence belongs to the aspartate/ornithine carbamoyltransferase superfamily. ATCase family. As to quaternary structure, heterododecamer (2C3:3R2) of six catalytic PyrB chains organized as two trimers (C3), and six regulatory PyrI chains organized as three dimers (R2).

The enzyme catalyses carbamoyl phosphate + L-aspartate = N-carbamoyl-L-aspartate + phosphate + H(+). It functions in the pathway pyrimidine metabolism; UMP biosynthesis via de novo pathway; (S)-dihydroorotate from bicarbonate: step 2/3. Catalyzes the condensation of carbamoyl phosphate and aspartate to form carbamoyl aspartate and inorganic phosphate, the committed step in the de novo pyrimidine nucleotide biosynthesis pathway. The polypeptide is Aspartate carbamoyltransferase catalytic subunit (Psychrobacter cryohalolentis (strain ATCC BAA-1226 / DSM 17306 / VKM B-2378 / K5)).